The sequence spans 209 residues: ATP phosphoribosyltransferase (209 aa).

It belongs to the ATP phosphoribosyltransferase family. Short subfamily. Heteromultimer composed of HisG and HisZ subunits.

Its subcellular location is the cytoplasm. The catalysed reaction is 1-(5-phospho-beta-D-ribosyl)-ATP + diphosphate = 5-phospho-alpha-D-ribose 1-diphosphate + ATP. The protein operates within amino-acid biosynthesis; L-histidine biosynthesis; L-histidine from 5-phospho-alpha-D-ribose 1-diphosphate: step 1/9. Its function is as follows. Catalyzes the condensation of ATP and 5-phosphoribose 1-diphosphate to form N'-(5'-phosphoribosyl)-ATP (PR-ATP). Has a crucial role in the pathway because the rate of histidine biosynthesis seems to be controlled primarily by regulation of HisG enzymatic activity. The chain is ATP phosphoribosyltransferase from Alkaliphilus metalliredigens (strain QYMF).